The chain runs to 229 residues: All-trans retinoic acid-induced differentiation factor (229 aa).

Positions 1–30 (MAPHDPGSLTTLVPWAAALLLALGVERALA) are cleaved as a signal peptide. The Extracellular segment spans residues 31-199 (LPEICTQCPG…YKCMRQGSFS (169 aa)). N-linked (GlcNAc...) asparagine glycans are attached at residues Asn44, Asn79, Asn157, and Asn168. In terms of domain architecture, EGF-like spans 152 to 193 (QKNLCNNTGDPEMCPENGSCVPDGPGLLQCVCADGFHGYKCM). Cystine bridges form between Cys156–Cys171, Cys165–Cys181, and Cys183–Cys192. Residues 200–220 (LLMFFGILGATTLSVSILLWA) form a helical membrane-spanning segment. Over 221–229 (TQRRKAKTS) the chain is Cytoplasmic.

As to quaternary structure, interacts with NELL1; the interaction promotes osteoblastic differentiation and mineralization. Interacts with SLC37A3; the interaction is direct and both proteins are mutually dependent for their stability. Weakly expressed in hematopoietic cell lines.

It localises to the nucleus envelope. It is found in the cell membrane. The protein localises to the lysosome membrane. Promotes osteoblast cell differentiation and terminal mineralization. Plays a role in inducing the cell cycle arrest via inhibiting CCND1 expression in all-trans-retinoic acid (ATRA) signal pathway. In osteoclasts, forms a transporter complex with ATRAID for nitrogen-containing-bisphophonates (N-BPs) required for releasing N-BP molecules that have trafficked to lysosomes through fluid-phase endocytosis into the cytosol. The polypeptide is All-trans retinoic acid-induced differentiation factor (Homo sapiens (Human)).